The sequence spans 483 residues: Altronate oxidoreductase (483 aa).

18–29 (IIQFGEGNFLRA) is an NAD(+) binding site.

Belongs to the mannitol dehydrogenase family. UxaB subfamily.

It carries out the reaction D-altronate + NAD(+) = keto-D-tagaturonate + NADH + H(+). Its pathway is carbohydrate metabolism; pentose and glucuronate interconversion. The chain is Altronate oxidoreductase from Yersinia enterocolitica serotype O:8 / biotype 1B (strain NCTC 13174 / 8081).